We begin with the raw amino-acid sequence, 414 residues long: Esterase FrsA (414 aa).

Belongs to the FrsA family.

It catalyses the reaction a carboxylic ester + H2O = an alcohol + a carboxylate + H(+). Functionally, catalyzes the hydrolysis of esters. This chain is Esterase FrsA, found in Escherichia coli O157:H7.